The following is a 600-amino-acid chain: NADPH-dependent diflavin oxidoreductase 1 (600 aa).

The Flavodoxin-like domain occupies 6–150 (LLILYGSQTG…VVDPWLKDLW (145 aa)). FMN is bound by residues 12–17 (SQTGTA), 59–62 (ATTG), 97–106 (LGDSSYPKFN), and aspartate 132. An FAD-binding FR-type domain is found at 210–449 (IHPFLAPVLS…WVKKGSMKFP (240 aa)). FAD is bound by residues arginine 354, 386–389 (RAFS), and 420–423 (GLCS). NADP(+)-binding positions include threonine 463, 518–519 (SR), and 524–528 (KIYVQ). Tryptophan 599 is a binding site for FAD.

This sequence belongs to the NADPH-dependent diflavin oxidoreductase NDOR1 family. In the N-terminal section; belongs to the flavodoxin family. The protein in the C-terminal section; belongs to the flavoprotein pyridine nucleotide cytochrome reductase family. As to quaternary structure, interacts with ciapin1; as part of the cytosolic iron-sulfur (Fe-S) protein assembly (CIA) machinery. Requires FAD as cofactor. It depends on FMN as a cofactor.

It localises to the cytoplasm. It is found in the perinuclear region. The enzyme catalyses 2 oxidized [2Fe-2S]-[protein] + NADPH = 2 reduced [2Fe-2S]-[protein] + NADP(+) + H(+). NADPH-dependent reductase which is a central component of the cytosolic iron-sulfur (Fe-S) protein assembly (CIA) machinery. Transfers electrons from NADPH via its FAD and FMN prosthetic groups to the [2Fe-2S] cluster of ciapin1, another key component of the CIA machinery. In turn, this reduced cluster provides electrons for assembly of cytosolic iron-sulfur cluster proteins. It can also reduce the [2Fe-2S] cluster of cisd1 and activate this protein implicated in Fe/S cluster repair. This is NADPH-dependent diflavin oxidoreductase 1 from Xenopus laevis (African clawed frog).